The chain runs to 200 residues: MSSLKGKRIGFGLTGSHCTYEAVFPQIEELVNEGAEVRPVVTFNVKSTNTRFGEGAEWVKKIEDLTGYEAIDSIVKAEPLGPKLPLDCMVIAPLTGNSMSKLANAMTDSPVLMAAKATIRNNRPVVLGISTNDALGLNGTNLMRLMSTKNIFFIPFGQDDPFKKPNSMVAKMDLLPQTIEKALMHQQLQPILVENYQGND.

As to quaternary structure, dipicolinate synthase likely consists of DpaA and DpaB, since both proteins are required for DPA synthesis.

The enzyme catalyses (S)-2,3-dihydrodipicolinate + NADP(+) = dipicolinate + NADPH + H(+). Functionally, together with DpaA, catalyzes the conversion of dihydrodipicolinate to dipicolinate (DPA), which constitutes up to 10% of the dry weight of the spore. The polypeptide is Dipicolinate synthase subunit B (dpaB) (Bacillus subtilis (strain 168)).